The chain runs to 65 residues: Crotamine CRO1 (65 aa).

The signal sequence occupies residues 1 to 22; that stretch reads MKILYLLFAFLFLAFLSEPGNA. 3 disulfides stabilise this stretch: Cys26/Cys58, Cys33/Cys52, and Cys40/Cys59.

It belongs to the crotamine-myotoxin family. As to quaternary structure, monomer. In terms of tissue distribution, expressed by the venom gland.

The protein resides in the secreted. In terms of biological role, cationic peptide that possesses multiple functions. It acts as a cell-penetrating peptide (CPP), and as a potent voltage-gated potassium channel (Kv) inhibitor. It exhibits antimicrobial activities, hind limb paralysis, and severe muscle necrosis by a non-enzymatic mechanism. This is Crotamine CRO1 (CRO1) from Crotalus durissus terrificus (South American rattlesnake).